Reading from the N-terminus, the 110-residue chain is Membrane-associated protein slr1513 (110 aa).

The protein localises to the cellular thylakoid membrane. It is found in the cell membrane. This Synechocystis sp. (strain ATCC 27184 / PCC 6803 / Kazusa) protein is Membrane-associated protein slr1513.